Consider the following 324-residue polypeptide: Acetyl-coenzyme A carboxylase carboxyl transferase subunit beta (324 aa).

Over residues 1–16 (MTKNNNDLSNSSSNPP) the composition is skewed to low complexity. Positions 1 to 51 (MTKNNNDLSNSSSNPPSNRPVAGKEAELEIQRETHAAQSGQSESWLSRPIP) are disordered. Basic and acidic residues predominate over residues 22 to 35 (AGKEAELEIQRETH). Residues 36-45 (AAQSGQSESW) show a composition bias toward polar residues. A CoA carboxyltransferase N-terminal domain is found at 68–324 (PSTECPQCHS…YRLLAKLTHV (257 aa)). The Zn(2+) site is built by C72, C75, C91, and C94. The C4-type zinc-finger motif lies at 72–94 (CPQCHSMITNTALIFNAYVCPHC).

This sequence belongs to the AccD/PCCB family. In terms of assembly, acetyl-CoA carboxylase is a heterohexamer composed of biotin carboxyl carrier protein (AccB), biotin carboxylase (AccC) and two subunits each of ACCase subunit alpha (AccA) and ACCase subunit beta (AccD). Zn(2+) serves as cofactor.

Its subcellular location is the cytoplasm. The catalysed reaction is N(6)-carboxybiotinyl-L-lysyl-[protein] + acetyl-CoA = N(6)-biotinyl-L-lysyl-[protein] + malonyl-CoA. Its pathway is lipid metabolism; malonyl-CoA biosynthesis; malonyl-CoA from acetyl-CoA: step 1/1. Its function is as follows. Component of the acetyl coenzyme A carboxylase (ACC) complex. Biotin carboxylase (BC) catalyzes the carboxylation of biotin on its carrier protein (BCCP) and then the CO(2) group is transferred by the transcarboxylase to acetyl-CoA to form malonyl-CoA. The protein is Acetyl-coenzyme A carboxylase carboxyl transferase subunit beta of Psychrobacter sp. (strain PRwf-1).